A 446-amino-acid polypeptide reads, in one-letter code: Solute carrier family 52, riboflavin transporter, member 2 (446 aa).

4 helical membrane passes run 14–34, 47–67, 79–99, and 104–124; these read LLVALFGMGSWAAINGIWVEL, LPSYLSVLVALGNLGLLVVTL, APIQVVQALSVVGTALLAPLW, and VMAGQVHSVAFLALTFVLALA. Asparagine 129 carries N-linked (GlcNAc...) asparagine glycosylation. 2 helical membrane passes run 147–167 and 196–216; these read FFLGQGLSALLPCVLALGQGV and FFGALTALLVISAAAFQGLLL. A disordered region spans residues 228-267; the sequence is GSGTGLRGGAPGVEEEEEEEASPLQEPPSQAAGNTPSPDP. Gly residues predominate over residues 229 to 238; the sequence is SGTGLRGGAP. Polar residues predominate over residues 254–263; sequence PPSQAAGNTP. 5 helical membrane-spanning segments follow: residues 278–298, 313–333, 340–360, 367–387, and 405–425; these read ACLLGLLATTSALTNGVLPAV, LAVVLGSASNPLACFLAMGIL, LGGLSLLGTLFGAYLMALAIL, VGTSAGMVLVVVLWALCLGVF, and ALLAAGVAIQVGSLLGAVTMF.

Belongs to the riboflavin transporter family.

Its subcellular location is the cell membrane. It carries out the reaction riboflavin(in) = riboflavin(out). Its activity is regulated as follows. Riboflavin transport is Na(+)-independent but moderately pH-sensitive. Activity is strongly inhibited by riboflavin analogs, such as lumiflavin. Weakly inhibited by flavin adenine dinucleotide (FAD) and flavin mononucleotide (FMN). Functionally, plasma membrane transporter mediating the uptake by cells of the water soluble vitamin B2/riboflavin that plays a key role in biochemical oxidation-reduction reactions of the carbohydrate, lipid, and amino acid metabolism. May also act as a receptor for 4-hydroxybutyrate. Its function is as follows. (Microbial infection) In case of infection by porcine endogenous retrovirus (PERV-A), acts as a cell receptor to retroviral envelopes. This chain is Solute carrier family 52, riboflavin transporter, member 2 (SLC52A2), found in Sus scrofa (Pig).